Reading from the N-terminus, the 107-residue chain is Nitrogenase-stabilizing/protective protein NifW (107 aa).

It belongs to the NifW family. As to quaternary structure, homotrimer; associates with NifD.

Functionally, may protect the nitrogenase Fe-Mo protein from oxidative damage. In Gloeothece citriformis (strain PCC 7424) (Cyanothece sp. (strain PCC 7424)), this protein is Nitrogenase-stabilizing/protective protein NifW.